A 46-amino-acid chain; its full sequence is Delta-actitoxin-Avd1d (46 aa).

3 disulfides stabilise this stretch: cysteine 4–cysteine 44, cysteine 6–cysteine 34, and cysteine 27–cysteine 45.

This sequence belongs to the sea anemone sodium channel inhibitory toxin family. Type I subfamily.

The protein localises to the secreted. Its subcellular location is the nematocyst. Functionally, binds specifically to voltage-gated sodium channels (Nav), thereby delaying their inactivation during signal transduction. Thus it strongly stimulates mammalian cardiac muscle contraction. This chain is Delta-actitoxin-Avd1d, found in Anemonia sulcata (Mediterranean snakelocks sea anemone).